The chain runs to 805 residues: MRHGRGSAVSAAISGLSPAKNSPFPQLCNVLLVASLSKTLSQSGTRSLDANSIPISEPVVLQILRRNSIDPSKKLDFFRWCYSLRPGYKHSATAYSQIFRTVCRTGLLGEVPDLLGSMKEDGVNLDQTMAKILLDSLIRSGKFESALGVLDYMEELGDCLNPSVYDSVLIALVKKHELRLALSILFKLLEASDNHSDDDTGRVIIVSYLPGTVAVNELLVGLRRADMRSEFKRVFEKLKGMKRFKFDTWSYNICIHGFGCWGDLDAALSLFKEMKERSSVYGSSFGPDICTYNSLIHVLCLFGKAKDALIVWDELKVSGHEPDNSTYRILIQGCCKSYRMDDAMRIYGEMQYNGFVPDTIVYNCLLDGTLKARKVTEACQLFEKMVQEGVRASCWTYNILIDGLFRNGRAEAGFTLFCDLKKKGQFVDAITFSIVGLQLCREGKLEGAVKLVEEMETRGFSVDLVTISSLLIGFHKQGRWDWKEKLMKHIREGNLVPNVLRWNAGVEASLKRPQSKDKDYTPMFPSKGSFLDIMSMVGSEDDGASAEEVSPMEDDPWSSSPYMDQLAHQRNQPKPLFGLARGQRVEAKPDSFDVDMMNTFLSIYLSKGDLSLACKLFEIFNGMGVTDLTSYTYNSMMSSFVKKGYFQTARGVLDQMFENFCAADIATYNVIIQGLGKMGRADLASAVLDRLTKQGGYLDIVMYNTLINALGKATRLDEATQLFDHMKSNGINPDVVSYNTMIEVNSKAGKLKEAYKYLKAMLDAGCLPNHVTDTILDYLGKEMEKARFKKASFVRNKPNNNNISS.

PPR repeat units lie at residues 91–125 (SATA…GVNL), 126–160 (DQTM…GDCL), 161–196 (NPSV…DNHS), 211–241 (GTVA…LKGM), 247–277 (DTWS…MKER), 288–322 (DICT…GHEP), 323–357 (DNST…GFVP), 358–392 (DTIV…GVRA), 393–427 (SCWT…GQFV), 428–462 (DAIT…GFSV), 463–497 (DLVT…NLVP), 593–627 (DVDM…GVTD), 629–663 (TSYT…FCAA), 664–698 (DIAT…GGYL), 699–733 (DIVM…GINP), and 734–768 (DVVS…GCLP).

The protein belongs to the PPR family. P subfamily.

In Arabidopsis thaliana (Mouse-ear cress), this protein is Pentatricopeptide repeat-containing protein At4g01570.